The chain runs to 238 residues: ATP synthase subunit a (238 aa).

The next 5 helical transmembrane spans lie at 15–35, 76–96, 111–131, 167–187, and 208–230; these read IFNL…FVFI, YSLF…LGLM, PTAN…LTHI, LALR…LLLL, and AFSV…VYLG.

It belongs to the ATPase A chain family. In terms of assembly, F-type ATPases have 2 components, CF(1) - the catalytic core - and CF(0) - the membrane proton channel. CF(1) has five subunits: alpha(3), beta(3), gamma(1), delta(1), epsilon(1). CF(0) has three main subunits: a(1), b(2) and c(9-12). The alpha and beta chains form an alternating ring which encloses part of the gamma chain. CF(1) is attached to CF(0) by a central stalk formed by the gamma and epsilon chains, while a peripheral stalk is formed by the delta and b chains.

The protein resides in the cell membrane. Key component of the proton channel; it plays a direct role in the translocation of protons across the membrane. The protein is ATP synthase subunit a of Streptococcus pneumoniae serotype 19F (strain G54).